The sequence spans 609 residues: MADPSSFASPEKFNIKHMHLKLHVDFTSRAIAASTSLTVRSLQDSLASLILDTKDLTIKKVAVNGKDATFALGTTHSFKGTPLEITLPFSLTRGQEVIVEIDSVTSPKSSALQWLNKEQTAGKIHPYLFSQCQATHCRSIIPCQDTPSVKFTYYSQVSVPKELMALMSALRDGELSEQSDSNRKIYRFKQNVPIPSYLIALVVGALEGRKVGPRTTIWTEKELLEPSVYEFAETEKMLKYAEDLAGPYVWGQYDLLILPPSFPYGGMENPCLTFVTPTVLAGDRSLASVIAHEISHSWTGNLVTNETWENFWLNEGHTVYLERRIDGRLYGEEFRQFKALGGWKELQNSVNTFGATNPLTNLVPNLHEVDVDAAFSSVPYEKGFALLFYLEQLLGGPEIFLGFLKSYIQMFAFKSVTTEEWKKFLYSYFKDKVDILDKVDWKGWMHTPGMPPVQPKYDMTLANACITLGQKWVKATESDLGSFSADDVKDLSSHQLIEVLAILLLEKPLPVSHVKRMQEVYNLNDVKNSEIRFRWLRLCIRAGWEDVIPLALAMATEQGRMKFTRPLYRDLYNFEKAREQTVNTFLKNRSFMHPVTEMLVAKDLHISAS.

Residues 131–133 and 263–268 contribute to the a peptide site; these read QCQ and PYGGME. Residue His292 participates in Zn(2+) binding. Glu293 acts as the Proton acceptor in catalysis. Positions 296 and 315 each coordinate Zn(2+). Tyr380 acts as the Proton donor in catalysis. 560 to 562 is an a peptide binding site; it reads RMK.

The protein belongs to the peptidase M1 family. Homodimer. Zn(2+) is required as a cofactor. In terms of tissue distribution, expressed in oocytes.

It localises to the cytoplasm. It carries out the reaction Release of the N-terminal residue from a tripeptide.. It catalyses the reaction leukotriene A4 + H2O = leukotriene B4. It functions in the pathway lipid metabolism; leukotriene B4 biosynthesis. With respect to regulation, the epoxide hydrolase activity is mildly restrained by suicide inactivation, possibly involving binding of LTA4 to Tyr-380. In terms of biological role, bifunctional zinc metalloenzyme that comprises both epoxide hydrolase (EH) and aminopeptidase activities. Acts as an epoxide hydrolase to catalyze the conversion of leukotriene A4 (LTA4) to the pro-inflammatory mediator leukotriene B4 (LTB4). During the conversion of LTA4 to LTB4, a second product is formed, the isomeric delta6-trans-delta8-cis-LTB4 (5S,12R-dihydroxy-6,10-trans-8,14-cis-eicosatetraenoic acid), with a relative formation of 10% delta6-trans-delta8-cis-LTB4 compared to 90% LTB4. The production of delta6-trans-delta8-cis-LTB4 seems to depend on the phenylalanine residue at position 375. Also has aminopeptidase activity. In Xenopus laevis (African clawed frog), this protein is Leukotriene A-4 hydrolase.